Reading from the N-terminus, the 241-residue chain is Beta-casein (241 aa).

An N-terminal signal peptide occupies residues 1 to 15 (MKILILACLVALALA). A disordered region spans residues 21 to 45 (LNVSSETVESLSSNEPDSSSEESIT). Ser24 carries the post-translational modification Phosphoserine; in form 4-P, form 5-P, form 6-P and form 7-P. Ser25 carries the phosphoserine; in form 7-P modification. Thr27 carries the phosphothreonine; in form 6-P and form 7-P modification. Ser30 and Ser32 each carry phosphoserine. At Ser33 the chain carries Phosphoserine; in form 5-P, form 6-P and form 7-P. Phosphoserine; in form 4-P, form 5-P, form 6-P and form 7-P is present on residues Ser38, Ser39, and Ser40. Residue Asn150 is modified to Deamidated asparagine.

This sequence belongs to the beta-casein family. Post-translationally, there are at least five different forms found in milk, with varying degrees of phosphorylation. These include form 3-P which is phosphorylated at three sites that have not been determined, this form is present in very low amounts, form 4-P which is phosphorylated at four sites, form 5-P which is phosphorylated at five sites, form 6-P which is phosphorylated at six sites, and form 7-P which is phosphorylated at seven sites. Spontaneous deamidation of Asn-150 produces aspartate or isoaspartate. Mammary gland specific. Secreted in milk.

It is found in the secreted. Its function is as follows. Important role in determination of the surface properties of the casein micelles. The protein is Beta-casein of Equus caballus (Horse).